We begin with the raw amino-acid sequence, 148 residues long: RING finger protein 24 (148 aa).

The chain crosses the membrane as a helical span at residues 24 to 44; the sequence is IYIVVFGTAIFVFILSLLFCC. The segment at 78–119 adopts an RING-type zinc-finger fold; the sequence is CAVCLEDFKPRDELGICPCKHAFHRKCLIKWLEVRKVCPLCN.

As to quaternary structure, interacts with TRPC1, TRPC3, TRPC4, TRPC5, TRPC6 and TRPC7.

The protein localises to the golgi apparatus membrane. May play a role in TRPCs intracellular trafficking. This chain is RING finger protein 24 (RNF24), found in Homo sapiens (Human).